A 172-amino-acid chain; its full sequence is Small ribosomal subunit protein uS5 (172 aa).

Residues Leu16 to Val79 enclose the S5 DRBM domain.

Belongs to the universal ribosomal protein uS5 family. Part of the 30S ribosomal subunit. Contacts proteins S4 and S8.

With S4 and S12 plays an important role in translational accuracy. Functionally, located at the back of the 30S subunit body where it stabilizes the conformation of the head with respect to the body. The polypeptide is Small ribosomal subunit protein uS5 (Pelodictyon phaeoclathratiforme (strain DSM 5477 / BU-1)).